We begin with the raw amino-acid sequence, 242 residues long: Uridylate kinase (242 aa).

Position 11–14 (11–14 (KLSG)) interacts with ATP. Glycine 53 contacts UMP. The ATP site is built by glycine 54 and arginine 58. UMP is bound by residues aspartate 73 and 134 to 141 (SGNPFFTT). Residues threonine 161, tyrosine 167, and aspartate 170 each contribute to the ATP site.

The protein belongs to the UMP kinase family. In terms of assembly, homohexamer.

It is found in the cytoplasm. The catalysed reaction is UMP + ATP = UDP + ADP. Its pathway is pyrimidine metabolism; CTP biosynthesis via de novo pathway; UDP from UMP (UMPK route): step 1/1. Inhibited by UTP. In terms of biological role, catalyzes the reversible phosphorylation of UMP to UDP. The sequence is that of Uridylate kinase from Thermosynechococcus vestitus (strain NIES-2133 / IAM M-273 / BP-1).